We begin with the raw amino-acid sequence, 173 residues long: Adenine phosphoribosyltransferase (173 aa).

The protein belongs to the purine/pyrimidine phosphoribosyltransferase family. As to quaternary structure, homodimer.

The protein localises to the cytoplasm. It carries out the reaction AMP + diphosphate = 5-phospho-alpha-D-ribose 1-diphosphate + adenine. Its pathway is purine metabolism; AMP biosynthesis via salvage pathway; AMP from adenine: step 1/1. Functionally, catalyzes a salvage reaction resulting in the formation of AMP, that is energically less costly than de novo synthesis. This is Adenine phosphoribosyltransferase from Desulfitobacterium hafniense (strain Y51).